The sequence spans 168 residues: Phosphopantetheine adenylyltransferase (168 aa).

Threonine 14 is a substrate binding site. ATP is bound by residues 14 to 15 and histidine 22; that span reads TF. Lysine 46, leucine 78, and arginine 92 together coordinate substrate. Residues 93 to 95, glutamate 103, and 128 to 134 contribute to the ATP site; these read GLR and YSFISSS.

This sequence belongs to the bacterial CoaD family. In terms of assembly, homohexamer. Requires Mg(2+) as cofactor.

The protein localises to the cytoplasm. The catalysed reaction is (R)-4'-phosphopantetheine + ATP + H(+) = 3'-dephospho-CoA + diphosphate. The protein operates within cofactor biosynthesis; coenzyme A biosynthesis; CoA from (R)-pantothenate: step 4/5. Its function is as follows. Reversibly transfers an adenylyl group from ATP to 4'-phosphopantetheine, yielding dephospho-CoA (dPCoA) and pyrophosphate. In Xanthomonas campestris pv. campestris (strain 8004), this protein is Phosphopantetheine adenylyltransferase.